Consider the following 195-residue polypeptide: Small ribosomal subunit protein uS4B (195 aa).

The S4 RNA-binding domain occupies 107–181 (RRLQTQVYKL…VARRNAARKA (75 aa)). The tract at residues 161–195 (TSPFGGARPGRVARRNAARKAEASGEAAEEAEDEE) is disordered. K180 participates in a covalent cross-link: Glycyl lysine isopeptide (Lys-Gly) (interchain with G-Cter in ubiquitin). Phosphoserine is present on S184.

Belongs to the universal ribosomal protein uS4 family. In terms of assembly, component of the small ribosomal subunit (SSU). Mature yeast ribosomes consist of a small (40S) and a large (60S) subunit. The 40S small subunit contains 1 molecule of ribosomal RNA (18S rRNA) and 33 different proteins (encoded by 57 genes). The large 60S subunit contains 3 rRNA molecules (25S, 5.8S and 5S rRNA) and 46 different proteins (encoded by 81 genes). Interacts with snoRNA U3. uS11 interacts with MPP10. Component of the ribosomal small subunit (SSU) processome composed of at least 40 protein subunits and snoRNA U3.

It localises to the cytoplasm. It is found in the nucleus. Its subcellular location is the nucleolus. Its function is as follows. Component of the ribosome, a large ribonucleoprotein complex responsible for the synthesis of proteins in the cell. The small ribosomal subunit (SSU) binds messenger RNAs (mRNAs) and translates the encoded message by selecting cognate aminoacyl-transfer RNA (tRNA) molecules. The large subunit (LSU) contains the ribosomal catalytic site termed the peptidyl transferase center (PTC), which catalyzes the formation of peptide bonds, thereby polymerizing the amino acids delivered by tRNAs into a polypeptide chain. The nascent polypeptides leave the ribosome through a tunnel in the LSU and interact with protein factors that function in enzymatic processing, targeting, and the membrane insertion of nascent chains at the exit of the ribosomal tunnel. uS4 is involved in nucleolar processing of pre-18S ribosomal RNA and ribosome assembly. The chain is Small ribosomal subunit protein uS4B from Saccharomyces cerevisiae (strain ATCC 204508 / S288c) (Baker's yeast).